A 340-amino-acid chain; its full sequence is Glycerol-3-phosphate dehydrogenase [NAD(P)+] (340 aa).

The NADPH site is built by tryptophan 11, arginine 33, and lysine 110. Sn-glycerol 3-phosphate is bound by residues lysine 110, glycine 144, and serine 146. Alanine 148 is a binding site for NADPH. The sn-glycerol 3-phosphate site is built by lysine 199, aspartate 252, serine 262, arginine 263, and asparagine 264. Residue lysine 199 is the Proton acceptor of the active site. Arginine 263 serves as a coordination point for NADPH. NADPH is bound by residues valine 287 and glutamate 289.

The protein belongs to the NAD-dependent glycerol-3-phosphate dehydrogenase family.

The protein localises to the cytoplasm. The enzyme catalyses sn-glycerol 3-phosphate + NAD(+) = dihydroxyacetone phosphate + NADH + H(+). The catalysed reaction is sn-glycerol 3-phosphate + NADP(+) = dihydroxyacetone phosphate + NADPH + H(+). The protein operates within membrane lipid metabolism; glycerophospholipid metabolism. In terms of biological role, catalyzes the reduction of the glycolytic intermediate dihydroxyacetone phosphate (DHAP) to sn-glycerol 3-phosphate (G3P), the key precursor for phospholipid synthesis. This Polynucleobacter asymbioticus (strain DSM 18221 / CIP 109841 / QLW-P1DMWA-1) (Polynucleobacter necessarius subsp. asymbioticus) protein is Glycerol-3-phosphate dehydrogenase [NAD(P)+].